The chain runs to 90 residues: Small ribosomal subunit protein bS20 (90 aa).

Belongs to the bacterial ribosomal protein bS20 family.

Its function is as follows. Binds directly to 16S ribosomal RNA. In Francisella philomiragia subsp. philomiragia (strain ATCC 25017 / CCUG 19701 / FSC 153 / O#319-036), this protein is Small ribosomal subunit protein bS20.